Reading from the N-terminus, the 498-residue chain is Ulvan-active sulfatase (498 aa).

Positions 1–22 (MNSKKTGVIILGCIAFLHIACS) are cleaved as a signal peptide. 5 residues coordinate Ca(2+): Asp55, Asp56, Cys95, Asp266, and His267. Cys95 (nucleophile) is an active-site residue. A 3-oxoalanine (Cys) modification is found at Cys95.

The protein belongs to the sulfatase family. Ca(2+) is required as a cofactor. Post-translationally, the conversion to 3-oxoalanine (also known as C-formylglycine, FGly), of a serine or cysteine residue in prokaryotes and of a cysteine residue in eukaryotes, is critical for catalytic activity. This post-translational modification is severely defective in multiple sulfatase deficiency (MSD).

The protein resides in the periplasm. Sulfatase involved in ulvan degradation. Ulvan is the main polysaccharide component of the Ulvales (green seaweed) cell wall. It is composed of disaccharide building blocks comprising 3-sulfated rhamnose (Rha3S) linked to D-glucuronic acid (GlcA), L-iduronic acid (IduA), or D-xylose (Xyl). In Formosa agariphila (strain DSM 15362 / KCTC 12365 / LMG 23005 / KMM 3901 / M-2Alg 35-1), this protein is Ulvan-active sulfatase.